Reading from the N-terminus, the 229-residue chain is Large ribosomal subunit protein bL25 (229 aa).

2 disordered regions span residues 1 to 21 and 187 to 229; these read MSDA…GASR and PSAL…KGDD. Positions 196 to 207 are enriched in acidic residues; sequence SEEEEDGEEVDA.

Belongs to the bacterial ribosomal protein bL25 family. CTC subfamily. In terms of assembly, part of the 50S ribosomal subunit; part of the 5S rRNA/L5/L18/L25 subcomplex. Contacts the 5S rRNA. Binds to the 5S rRNA independently of L5 and L18.

In terms of biological role, this is one of the proteins that binds to the 5S RNA in the ribosome where it forms part of the central protuberance. The chain is Large ribosomal subunit protein bL25 from Erythrobacter litoralis (strain HTCC2594).